The chain runs to 534 residues: NEDD8-activating enzyme E1 regulatory subunit (534 aa).

Residue Ala2 is modified to N-acetylalanine. Lys6 and Lys341 each carry N6-acetyllysine. The interaction with UBA3 stretch occupies residues 331 to 344 (DMIADSGKYIKLQN).

It belongs to the ubiquitin-activating E1 family. ULA1 subfamily. Heterodimer of UBA3 and NAE1. The complex binds NEDD8 and UBE2M. Binds APP and TP53BP2. In terms of processing, ubiquitinated by TRIP12, leading to its degradation by the proteasome. Ubiquitous in fetal tissues. Expressed throughout the adult brain.

Its subcellular location is the cell membrane. It functions in the pathway protein modification; protein neddylation. Its activity is regulated as follows. Binding of TP53BP2 to the regulatory subunit NAE1 decreases neddylation activity. Its function is as follows. Regulatory subunit of the dimeric UBA3-NAE1 E1 enzyme. E1 activates NEDD8 by first adenylating its C-terminal glycine residue with ATP, thereafter linking this residue to the side chain of the catalytic cysteine, yielding a NEDD8-UBA3 thioester and free AMP. E1 finally transfers NEDD8 to the catalytic cysteine of UBE2M. Necessary for cell cycle progression through the S-M checkpoint. Overexpression of NAE1 causes apoptosis through deregulation of NEDD8 conjugation. The covalent attachment of NEDD8 to target proteins is known as 'neddylation' and the process is involved in the regulation of cell growth, viability and development. The sequence is that of NEDD8-activating enzyme E1 regulatory subunit (NAE1) from Homo sapiens (Human).